Consider the following 439-residue polypeptide: FBD-associated F-box protein At5g56380 (439 aa).

In terms of domain architecture, F-box spans 1 to 61; sequence MDRISHLADE…LPETWGYQEP (61 aa). Residues 358–406 form the FBD domain; that stretch reads WNQPGSVPRCLSSSLETLEWVEYGGTHEEKELSTYLFKTAVCFKKASFT.

This chain is FBD-associated F-box protein At5g56380, found in Arabidopsis thaliana (Mouse-ear cress).